The chain runs to 112 residues: Probable head completion protein 2 (112 aa).

It belongs to the skunalikevirus head completion protein 2 family.

It is found in the virion. Its function is as follows. Probably functions as a stopper that is part of the head-tail connector and that locks the viral DNA in the capsid. During assembly, functions as a docking platform which the preassembled tail can bind to. Plays a role in morphogenesis of the virion capsid after genome packaging. The polypeptide is Probable head completion protein 2 (Lactococcus phage p2 (Lactococcus lactis bacteriophage p2)).